Here is a 788-residue protein sequence, read N- to C-terminus: MDVSGQETDWRSTAFRQKLVSQIEDAMRKAGVAHSKSSKDMESHVFLKAKTRDEYLSLVARLIIHFRDIHNKKSQASVSDPMNALQSLTGGPAAGAAGIGMPPRGPGQSLGGMGSLGAMGQPMSLSGQPPPGTSGMAPHSMAVVSTATPQTQLQLQQVALQQQQQQQQFQQQQQAALQQQQQQQQQQQFQAQQSAMQQQFQAVVQQQQQLQQQQQQQQHLIKLHHQNQQQIQQQQQQLQRIAQLQLQQQQQQQQQQQQQQQQALQAQPPIQQPPMQQPQPPPSQALPQQLQQMHHTQHHQPPPQPQQPPVAQNQPSQLPPQSQTQPLVSQAQALPGQMLYTQPPLKFVRAPMVVQQPPVQPQVQQQQTAVQTAQAAQMVAPGVQMITEALAQGGMHIRARFPPTTAVSAIPSSSIPLGRQPMAQVSQSSLPMLSSPSPGQQVQTPQSMPPPPQPSPQPGQPSSQPNSNVSSGPAPSPSSFLPSPSPQPSQSPVTARTPQNFSVPSPGPLNTPVNPSSVMSPAGSSQAEEQQYLDKLKQLSKYIEPLRRMINKIDKNEDRKKDLSKMKSLLDILTDPSKRCPLKTLQKCEIALEKLKNDMAVPTPPPPPVPPTKQQYLCQPLLDAVLANIRSPVFNHSLYRTFVPAMTAIHGPPITAPVVCTRKRRLEDDERQSIPSVLQGEVARLDPKFLVNLDPSHCSNNGTVHLICKLDDKDLPSVPPLELSVPADYPAQSPLWIDRQWQYDANPFLQSVHRCMTSRLLQLPDKHSVTALLNTWAQSVHQACLSAA.

The interaction with SREBF1 stretch occupies residues 9-73; the sequence is DWRSTAFRQK…IHFRDIHNKK (65 aa). Disordered stretches follow at residues 95–139 and 260–329; these read GAAG…MAPH and QQQA…PLVS. Gly residues predominate over residues 108–117; sequence QSLGGMGSLG. A compositionally biased stretch (low complexity) spans 260 to 269; sequence QQQALQAQPP. Over residues 270 to 284 the composition is skewed to pro residues; it reads IQQPPMQQPQPPPSQ. Composition is skewed to low complexity over residues 285–294 and 309–329; these read ALPQQLQQMH and PVAQ…PLVS. Arg-349 is modified (asymmetric dimethylarginine). The tract at residues 412 to 530 is disordered; the sequence is SSSIPLGRQP…PAGSSQAEEQ (119 aa). A compositionally biased stretch (low complexity) spans 426 to 446; the sequence is SQSSLPMLSSPSPGQQVQTPQ. Residues 447–459 show a composition bias toward pro residues; that stretch reads SMPPPPQPSPQPG. The segment covering 460-482 has biased composition (low complexity); it reads QPSSQPNSNVSSGPAPSPSSFLP. Polar residues-rich tracts occupy residues 493-503 and 511-529; these read VTARTPQNFSV and TPVN…QAEE. The Nuclear localization signal motif lies at 547 to 564; the sequence is RRMINKIDKNEDRKKDLS. At Thr-603 the chain carries Phosphothreonine.

This sequence belongs to the Mediator complex subunit 15 family. As to quaternary structure, component of the Mediator complex, which is composed of MED1, MED4, MED6, MED7, MED8, MED9, MED10, MED11, MED12, MED13, MED13L, MED14, MED15, MED16, MED17, MED18, MED19, MED20, MED21, MED22, MED23, MED24, MED25, MED26, MED27, MED29, MED30, MED31, CCNC, CDK8 and CDC2L6/CDK11. The MED12, MED13, CCNC and CDK8 subunits form a distinct module termed the CDK8 module. Mediator containing the CDK8 module is less active than Mediator lacking this module in supporting transcriptional activation. Individual preparations of the Mediator complex lacking one or more distinct subunits have been variously termed ARC, CRSP, DRIP, PC2, SMCC and TRAP. Interacts with SMAD2, SMAD3, SREBF1 and SREBF2. Interacts with WWTR1. Interacts with TRIM11. Post-translationally, ubiquitinated by TRIM11, leading to proteasomal degradation. As to expression, expressed in all tissues examined, including heart, brain, lung, spleen, thymus, pancreas, blood leukocyte and placenta. However, the level of expression varied, with highest expression in the placenta and peripheral blood and lowest in the pancreas and kidney.

It localises to the cytoplasm. Its subcellular location is the nucleus. Component of the Mediator complex, a coactivator involved in the regulated transcription of nearly all RNA polymerase II-dependent genes. Mediator functions as a bridge to convey information from gene-specific regulatory proteins to the basal RNA polymerase II transcription machinery. Mediator is recruited to promoters by direct interactions with regulatory proteins and serves as a scaffold for the assembly of a functional preinitiation complex with RNA polymerase II and the general transcription factors. Required for cholesterol-dependent gene regulation. Positively regulates the Nodal signaling pathway. The sequence is that of Mediator of RNA polymerase II transcription subunit 15 (MED15) from Homo sapiens (Human).